We begin with the raw amino-acid sequence, 329 residues long: Malate dehydrogenase 2 (329 aa).

12-18 (GAAGQIA) serves as a coordination point for NAD(+). Substrate is bound by residues Arg93 and Arg99. NAD(+) is bound by residues Asn106, Gln113, and 130 to 132 (VGN). Positions 132 and 163 each coordinate substrate. His188 acts as the Proton acceptor in catalysis.

It belongs to the LDH/MDH superfamily. MDH type 2 family.

The catalysed reaction is (S)-malate + NAD(+) = oxaloacetate + NADH + H(+). Its function is as follows. Catalyzes the reversible oxidation of malate to oxaloacetate. The protein is Malate dehydrogenase 2 of Burkholderia thailandensis (strain ATCC 700388 / DSM 13276 / CCUG 48851 / CIP 106301 / E264).